Consider the following 118-residue polypeptide: Hydrogenase maturation factor HypA (118 aa).

Residue His-2 coordinates Ni(2+). Residues Cys-73, Cys-76, Cys-89, and Cys-92 each contribute to the Zn(2+) site.

Belongs to the HypA/HybF family.

Its function is as follows. Involved in the maturation of [NiFe] hydrogenases. Required for nickel insertion into the metal center of the hydrogenase. The protein is Hydrogenase maturation factor HypA of Shewanella oneidensis (strain ATCC 700550 / JCM 31522 / CIP 106686 / LMG 19005 / NCIMB 14063 / MR-1).